The chain runs to 1717 residues: Protein MON2 homolog (1717 aa).

N-acetylserine is present on Ser-2. A phosphoserine mark is found at Ser-205 and Ser-537. Positions Glu-511 to Asp-538 are disordered. Residues Ser-522 to Asp-538 show a composition bias toward polar residues.

It belongs to the MON2 family. As to quaternary structure, homooligomer. Heterotrimer with ATP9A and DOP1B; this interaction is retromer-independent. Interacts with SNX3.

It is found in the early endosome membrane. Plays a role in regulating membrane trafficking of cargo proteins. Together with ATP9A and DOP1B, regulates SNX3 retromer-mediated endosomal sorting of WLS away from lysosomal degradation. This chain is Protein MON2 homolog, found in Homo sapiens (Human).